A 393-amino-acid polypeptide reads, in one-letter code: Isocitrate dehydrogenase [NAD] subunit gamma, mitochondrial (393 aa).

Residues 1-39 (MALKVATVAGSAAKAVLGPALLCRPWEVLGAHEVPSRNI) constitute a mitochondrion transit peptide. Citrate is bound by residues Thr-120 and Asn-133. Arg-136, Arg-167, and Asp-254 together coordinate substrate. Asp-254 is a Mn(2+) binding site. 3 residues coordinate ADP: Asn-312, Thr-313, and Asn-324.

The protein belongs to the isocitrate and isopropylmalate dehydrogenases family. Heterooligomer of subunits alpha (IDH3A), beta (IDH3B), and gamma (IDH3G) in the apparent ratio of 2:1:1. The heterodimer containing one IDH3A and one IDH3B subunit and the heterodimer containing one IDH3A and one IDH3G subunit assemble into a heterotetramer (which contains two subunits of IDH3A, one of IDH3B and one of IDH3G) and further into the heterooctamer. It depends on Mg(2+) as a cofactor. The cofactor is Mn(2+).

Its subcellular location is the mitochondrion. With respect to regulation, the heterotetramer and the heterodimer composed of IDH3A and IDH3G subunits can be allosterically activated by citrate (CIT) or/and ADP, and the two activators can act independently or synergistically. The heterodimer composed of IDH3A and IDH3B subunits cannot be allosterically regulated and the allosteric regulation of the heterotetramer is through the IDH3G subunit and not the IDH3B subunit. The IDH3G subunit contains the allosteric site which consists of a CIT-binding site and an ADP-binding site, and the binding of CIT and ADP causes conformational changes at the allosteric site which are transmitted to the active site in the catalytic subunit (IDH3A) through a cascade of conformational changes at the heterodimer interface, leading to stabilization of the isocitrate-binding at the active site and thus activation of the enzyme. ATP can activate the heterotetramer and the heterodimer composed of IDH3A and IDH3G subunits at low concentrations but inhibits their activities at high concentrations, whereas ATP exhibits only inhibitory effect on the heterodimer composed of IDH3A and IDH3B subunits. Regulatory subunit which plays a role in the allosteric regulation of the enzyme catalyzing the decarboxylation of isocitrate (ICT) into alpha-ketoglutarate. The heterodimer composed of the alpha (IDH3A) and beta (IDH3B) subunits and the heterodimer composed of the alpha (IDH3A) and gamma (IDH3G) subunits, have considerable basal activity but the full activity of the heterotetramer (containing two subunits of IDH3A, one of IDH3B and one of IDH3G) requires the assembly and cooperative function of both heterodimers. This chain is Isocitrate dehydrogenase [NAD] subunit gamma, mitochondrial (IDH3G), found in Homo sapiens (Human).